Here is a 690-residue protein sequence, read N- to C-terminus: MPRDFSLDKVRNIGIMAHIDAGKTTTTERILFYTGKTHKLGEVHEGTATMDWMVQEQERGITITSAATTCYWKGHKINIIDTPGHVDFTVEVERSLRILDGAVAVFSAKEGVEPQSETVWRQADKYHVPRIAYVNKMDVIGADFFNVIDMIRERLGANPVAIQIPIGKEDTFRGIVDLIKMEAIIYKDDLGTVMDETEIPEDLKPLAEEYREKLLEAIAEVDETIMEKYLEGEEITEEEIHAALRKGTINGELVPVVCGSSYKNKGVQPLLDAIVNYLPSPLDLPPVKGMSIDGGEELERKPDDNEPFSALAFKIMADPYVGKLAFFRVYSGTLKAGSYVLNSTKGKKERIGRILRMHANHREEIDAVYTGDIAAAVGLKDTTTGDTLCDENHPILLESMDFPEPVISVAIEPKTKAAQEKMSIALSKLAEEDPTFKTYTDQETGQTIIAGMGELHLEIIVDRLRREFNVECNVGKPQVAYKETITKPVRVEGKFIRQSGGRGQYGHVWLEMEPAPRGEGYIFENRIVGGVIPKEFIPAVDAGIQEAMQNGVLGGYPVIDVKVALVDGSYHEVDSSDMAFKIAGSIAFREGMKKADPVLLEPIMKVEVVVPEEYMGDVIGDLNARRGKVEGMETRSGARVIRAFVPLAEMFGYATDLRSKTQGRGTYTMQFHHYEEVPKNIAEQILSAKK.

The region spanning Asp8–Leu282 is the tr-type G domain. Residues Ala17–Thr24, Asp81–His85, and Asn135–Asp138 each bind GTP.

It belongs to the TRAFAC class translation factor GTPase superfamily. Classic translation factor GTPase family. EF-G/EF-2 subfamily.

Its subcellular location is the cytoplasm. In terms of biological role, catalyzes the GTP-dependent ribosomal translocation step during translation elongation. During this step, the ribosome changes from the pre-translocational (PRE) to the post-translocational (POST) state as the newly formed A-site-bound peptidyl-tRNA and P-site-bound deacylated tRNA move to the P and E sites, respectively. Catalyzes the coordinated movement of the two tRNA molecules, the mRNA and conformational changes in the ribosome. This is Elongation factor G from Caldanaerobacter subterraneus subsp. tengcongensis (strain DSM 15242 / JCM 11007 / NBRC 100824 / MB4) (Thermoanaerobacter tengcongensis).